We begin with the raw amino-acid sequence, 365 residues long: Chorismate synthase (365 aa).

Residues R48 and R54 each coordinate NADP(+). Residues 131 to 133 (RSS), 243 to 244 (NA), G288, 303 to 307 (KPTSS), and R329 contribute to the FMN site.

It belongs to the chorismate synthase family. In terms of assembly, homotetramer. The cofactor is FMNH2.

The catalysed reaction is 5-O-(1-carboxyvinyl)-3-phosphoshikimate = chorismate + phosphate. The protein operates within metabolic intermediate biosynthesis; chorismate biosynthesis; chorismate from D-erythrose 4-phosphate and phosphoenolpyruvate: step 7/7. Catalyzes the anti-1,4-elimination of the C-3 phosphate and the C-6 proR hydrogen from 5-enolpyruvylshikimate-3-phosphate (EPSP) to yield chorismate, which is the branch point compound that serves as the starting substrate for the three terminal pathways of aromatic amino acid biosynthesis. This reaction introduces a second double bond into the aromatic ring system. The sequence is that of Chorismate synthase from Sinorhizobium medicae (strain WSM419) (Ensifer medicae).